The primary structure comprises 242 residues: Uridylate kinase (242 aa).

15–18 (KLSG) provides a ligand contact to ATP. Residues 23-28 (GDEGFG) form an involved in allosteric activation by GTP region. Position 57 (G57) interacts with UMP. The ATP site is built by G58 and R62. UMP contacts are provided by residues D77 and 138-145 (TGNPFCTT). ATP is bound by residues T165, Y171, and D174.

This sequence belongs to the UMP kinase family. Homohexamer.

It localises to the cytoplasm. It carries out the reaction UMP + ATP = UDP + ADP. It participates in pyrimidine metabolism; CTP biosynthesis via de novo pathway; UDP from UMP (UMPK route): step 1/1. Its activity is regulated as follows. Allosterically activated by GTP. Inhibited by UTP. In terms of biological role, catalyzes the reversible phosphorylation of UMP to UDP. This chain is Uridylate kinase, found in Shewanella sp. (strain MR-4).